Consider the following 201-residue polypeptide: Small ribosomal subunit protein uS4c (201 aa).

The interval 17 to 44 is disordered; sequence ALPGLTNKKPRTGSDLRNQSRSGKKSQY. In terms of domain architecture, S4 RNA-binding spans 89–149; the sequence is MRLDNILFRL…DEQKSRALIQ (61 aa).

Belongs to the universal ribosomal protein uS4 family. As to quaternary structure, part of the 30S ribosomal subunit. Contacts protein S5. The interaction surface between S4 and S5 is involved in control of translational fidelity.

Its subcellular location is the plastid. It localises to the chloroplast. Functionally, one of the primary rRNA binding proteins, it binds directly to 16S rRNA where it nucleates assembly of the body of the 30S subunit. In terms of biological role, with S5 and S12 plays an important role in translational accuracy. In Atropa belladonna (Belladonna), this protein is Small ribosomal subunit protein uS4c (rps4).